Reading from the N-terminus, the 157-residue chain is Serine-protein kinase RsbW (157 aa).

This sequence belongs to the anti-sigma-factor family.

The catalysed reaction is L-seryl-[protein] + ATP = O-phospho-L-seryl-[protein] + ADP + H(+). The enzyme catalyses L-threonyl-[protein] + ATP = O-phospho-L-threonyl-[protein] + ADP + H(+). In terms of biological role, negative regulator of sigma-B activity. Phosphorylates and inactivates its specific antagonist protein, RsbV. Upon phosphorylation of RsbV, RsbW is released and binds to sigma-B, thereby blocking its ability to form an RNA polymerase holoenzyme (E-sigma-B). The sequence is that of Serine-protein kinase RsbW from Listeria monocytogenes serovar 1/2a (strain ATCC BAA-679 / EGD-e).